Reading from the N-terminus, the 275-residue chain is Putative ribonuclease-like protein YfkH (275 aa).

Transmembrane regions (helical) follow at residues 23 to 43 (LAYF…TLTA), 83 to 103 (LLSF…NAIV), 126 to 146 (IFLT…PVFG), 172 to 192 (WGVS…IAPN), 199 to 219 (FVMP…TLFS), and 235 to 255 (IGGI…IILG).

The protein resides in the cell membrane. The protein is Putative ribonuclease-like protein YfkH (yfkH) of Bacillus subtilis (strain 168).